The sequence spans 293 residues: Ribosomal protein L11 methyltransferase (293 aa).

S-adenosyl-L-methionine is bound by residues Thr145, Gly166, Asp188, and Asn230.

It belongs to the methyltransferase superfamily. PrmA family.

It localises to the cytoplasm. It catalyses the reaction L-lysyl-[protein] + 3 S-adenosyl-L-methionine = N(6),N(6),N(6)-trimethyl-L-lysyl-[protein] + 3 S-adenosyl-L-homocysteine + 3 H(+). Methylates ribosomal protein L11. The protein is Ribosomal protein L11 methyltransferase of Edwardsiella ictaluri (strain 93-146).